Reading from the N-terminus, the 301-residue chain is Homoserine O-acetyltransferase (301 aa).

The active-site Acyl-thioester intermediate is the C142. The substrate site is built by K163 and S192. Catalysis depends on H235, which acts as the Proton acceptor. Residue E237 is part of the active site. R249 is a substrate binding site.

Belongs to the MetA family.

The protein resides in the cytoplasm. The catalysed reaction is L-homoserine + acetyl-CoA = O-acetyl-L-homoserine + CoA. It functions in the pathway amino-acid biosynthesis; L-methionine biosynthesis via de novo pathway; O-acetyl-L-homoserine from L-homoserine: step 1/1. Functionally, transfers an acetyl group from acetyl-CoA to L-homoserine, forming acetyl-L-homoserine. The sequence is that of Homoserine O-acetyltransferase from Bacillus cytotoxicus (strain DSM 22905 / CIP 110041 / 391-98 / NVH 391-98).